Consider the following 292-residue polypeptide: NAD kinase (292 aa).

Residue Asp73 is the Proton acceptor of the active site. NAD(+) contacts are provided by residues 73–74 (DG), 147–148 (NE), His158, Arg175, Asp177, 188–193 (TAYSLS), and Gln247.

The protein belongs to the NAD kinase family. A divalent metal cation is required as a cofactor.

It is found in the cytoplasm. The catalysed reaction is NAD(+) + ATP = ADP + NADP(+) + H(+). Its function is as follows. Involved in the regulation of the intracellular balance of NAD and NADP, and is a key enzyme in the biosynthesis of NADP. Catalyzes specifically the phosphorylation on 2'-hydroxyl of the adenosine moiety of NAD to yield NADP. This Salmonella agona (strain SL483) protein is NAD kinase.